The chain runs to 902 residues: Probable polyribonucleotide nucleotidyltransferase 1, chloroplastic (902 aa).

Residues Met-1 to Arg-66 constitute a chloroplast transit peptide. The segment covering Val-44–Arg-53 has biased composition (low complexity). A disordered region spans residues Val-44–Lys-93. Residues Glu-80–Ser-91 are compositionally biased toward polar residues. The KH domain maps to Pro-693–Ile-753. Residues Gly-763–Arg-832 enclose the S1 motif domain. Positions Ala-833–Glu-902 are disordered. Positions Asn-839 to Gly-850 are enriched in polar residues. The segment covering Thr-852 to Leu-862 has biased composition (basic and acidic residues). The segment covering Glu-877–Ser-888 has biased composition (low complexity).

It belongs to the polyribonucleotide nucleotidyltransferase family.

The protein localises to the plastid. It is found in the chloroplast. It catalyses the reaction RNA(n+1) + phosphate = RNA(n) + a ribonucleoside 5'-diphosphate. Its function is as follows. Involved in the metabolism of all major classes of plastid RNAs. Required for efficient 3'-end processing of mRNAs and 3'-end maturation of rRNA transcripts, but is not sufficient to mediate their degradation. Mediates tRNA degradation. May function as a poly(A) mRNA 3'-5' degrading phosphorylase. This chain is Probable polyribonucleotide nucleotidyltransferase 1, chloroplastic (PNP1), found in Oryza sativa subsp. japonica (Rice).